The chain runs to 270 residues: Formamidopyrimidine-DNA glycosylase (270 aa).

The Schiff-base intermediate with DNA role is filled by P2. E3 acts as the Proton donor in catalysis. Residue K58 is the Proton donor; for beta-elimination activity of the active site. DNA-binding residues include H91, R110, and R151. The segment at 236-270 adopts an FPG-type zinc-finger fold; that stretch reads FAYGRAGEFCKVCGTTLREVKLGQRASVYCPRCQR. R260 serves as the catalytic Proton donor; for delta-elimination activity.

Belongs to the FPG family. In terms of assembly, monomer. The cofactor is Zn(2+).

It carries out the reaction Hydrolysis of DNA containing ring-opened 7-methylguanine residues, releasing 2,6-diamino-4-hydroxy-5-(N-methyl)formamidopyrimidine.. The enzyme catalyses 2'-deoxyribonucleotide-(2'-deoxyribose 5'-phosphate)-2'-deoxyribonucleotide-DNA = a 3'-end 2'-deoxyribonucleotide-(2,3-dehydro-2,3-deoxyribose 5'-phosphate)-DNA + a 5'-end 5'-phospho-2'-deoxyribonucleoside-DNA + H(+). Functionally, involved in base excision repair of DNA damaged by oxidation or by mutagenic agents. Acts as a DNA glycosylase that recognizes and removes damaged bases. Has a preference for oxidized purines, such as 7,8-dihydro-8-oxoguanine (8-oxoG). Has AP (apurinic/apyrimidinic) lyase activity and introduces nicks in the DNA strand. Cleaves the DNA backbone by beta-delta elimination to generate a single-strand break at the site of the removed base with both 3'- and 5'-phosphates. The polypeptide is Formamidopyrimidine-DNA glycosylase (Ectopseudomonas mendocina (strain ymp) (Pseudomonas mendocina)).